A 2134-amino-acid chain; its full sequence is Genome polyprotein (2134 aa).

The Cytoplasmic segment spans residues 1 to 1377 (MSKLFSTVGK…WLFEKIKTSK (1377 aa)). The LRAT domain occupies 781-882 (IVSCSGEKAK…GDYGTKEGEK (102 aa)). Catalysis depends on residues His791 and His802. Cys863 functions as the Acyl-thioester intermediate in the catalytic mechanism. Residues 1127–1289 (LNKLGRLDKP…EEFSTHAMLD (163 aa)) form the SF3 helicase domain. ATP is bound at residue 1153–1160 (GNRGGGKS). The stretch at 1378–1392 (WYILGCVGAVLSVSV) is an intramembrane region. Residues 1393 to 2134 (LGVFAYHMIK…VKYRFIDDSF (742 aa)) are Cytoplasmic-facing. Position 1415 is an O-(5'-phospho-RNA)-tyrosine (Tyr1415). The region spanning 1431–1643 (DAQSVVDISN…ITKEMIEEML (213 aa)) is the Peptidase C3 domain. Catalysis depends on for protease 3C activity residues His1477, Asp1515, and Cys1603. The 122-residue stretch at 1880 to 2001 (DLVVGLDFSN…CIKKEYLDQK (122 aa)) folds into the RdRp catalytic domain.

This sequence belongs to the picornaviridae polyprotein family. In terms of processing, specific enzymatic cleavages by the viral protease in vivo yield a variety of precursors and mature proteins. During virion maturation, non-infectious particles are rendered infectious following cleavage of VP0. This maturation cleavage is followed by a conformational change of the particle. Post-translationally, VPg is uridylylated by the polymerase and is covalently linked to the 5'-end of genomic RNA. This uridylylated form acts as a nucleotide-peptide primer for the polymerase.

The protein resides in the virion. It localises to the host cytoplasm. The protein localises to the host cytoplasmic vesicle membrane. It catalyses the reaction RNA(n) + a ribonucleoside 5'-triphosphate = RNA(n+1) + diphosphate. It carries out the reaction a ribonucleoside 5'-triphosphate + H2O = a ribonucleoside 5'-diphosphate + phosphate + H(+). The catalysed reaction is Selective cleavage of Gln-|-Gly bond in the poliovirus polyprotein. In other picornavirus reactions Glu may be substituted for Gln, and Ser or Thr for Gly.. In terms of biological role, capsid proteins VP1, VP2, and VP3 form a closed capsid enclosing the viral positive strand RNA genome. All these proteins contain a beta-sheet structure called beta-barrel jelly roll. Together they form an icosahedral capsid (T=3) composed of 60 copies of each VP1, VP2, and VP3, with a diameter of approximately 300 Angstroms. VP1 is situated at the 12 fivefold axes, whereas VP2 and VP3 are located at the quasi-sixfold axes. Its function is as follows. VP0 precursor is a component of immature procapsids. The N-terminal domain of VP0, protein VP4, is needed for the assembly of 12 pentamers into the icosahedral structure. Unlike other picornaviruses, AEV VP4 may not be myristoylated. Protein 2B and 2BC precursor affect membrane integrity and cause an increase in membrane permeability. Functionally, associates with and induces structural rearrangements of intracellular membranes. It displays RNA-binding, nucleotide binding and NTPase activities. In terms of biological role, protein 3A, via its hydrophobic domain, serves as membrane anchor. Its function is as follows. Protein 3B is covalently linked to the 5'-end of both the positive-strand and negative-strand genomic RNAs. It acts as a genome-linked replication primer. Cysteine protease that generates mature viral proteins from the precursor polyprotein. In addition to its proteolytic activity, it binds to viral RNA, and thus influences viral genome replication. RNA and substrate bind cooperatively to the protease. Functionally, RNA-directed RNA polymerase 3D-POL replicates genomic and antigenomic RNA by recognizing replications specific signals. This is Genome polyprotein from Avian encephalomyelitis virus (strain Calnek vaccine) (AEV).